The primary structure comprises 208 residues: Thymidylate kinase (208 aa).

Residue 10–17 (GPDGSGKT) participates in ATP binding.

Belongs to the thymidylate kinase family.

The catalysed reaction is dTMP + ATP = dTDP + ADP. In terms of biological role, phosphorylation of dTMP to form dTDP in both de novo and salvage pathways of dTTP synthesis. This chain is Thymidylate kinase, found in Listeria welshimeri serovar 6b (strain ATCC 35897 / DSM 20650 / CCUG 15529 / CIP 8149 / NCTC 11857 / SLCC 5334 / V8).